A 243-amino-acid polypeptide reads, in one-letter code: Exosome complex component Rrp41 (243 aa).

Belongs to the RNase PH family. Rrp41 subfamily. As to quaternary structure, component of the archaeal exosome complex. Forms a hexameric ring-like arrangement composed of 3 Rrp41-Rrp42 heterodimers. The hexameric ring associates with a trimer of Rrp4 and/or Csl4 subunits.

Its subcellular location is the cytoplasm. In terms of biological role, catalytic component of the exosome, which is a complex involved in RNA degradation. Has 3'-&gt;5' exoribonuclease activity. Can also synthesize heteromeric RNA-tails. In Cenarchaeum symbiosum (strain A), this protein is Exosome complex component Rrp41.